We begin with the raw amino-acid sequence, 299 residues long: Protein N-terminal and lysine N-methyltransferase EFM7 (299 aa).

S-adenosyl-L-methionine is bound by residues Trp-74, 100 to 102, Asp-122, Trp-155, and Ser-178; that span reads GAG.

This sequence belongs to the class I-like SAM-binding methyltransferase superfamily. EFM7 family.

The protein localises to the cytoplasm. In terms of biological role, S-adenosyl-L-methionine-dependent protein methyltransferase that trimethylates the N-terminal glycine 'Gly-2' of elongation factor 1-alpha, before also catalyzing the mono- and dimethylation of 'Lys-3'. In Cryptococcus neoformans var. neoformans serotype D (strain B-3501A) (Filobasidiella neoformans), this protein is Protein N-terminal and lysine N-methyltransferase EFM7.